The following is a 441-amino-acid chain: MAQLCDTIIHAHCIVTQNKERVILYNGSLAITSGNIVALGPKEEICSFWDAKETLDLCNMLVMPGLINAHTHVAMTFFRGLADDLPLMEWLKSYIFPIERHLTPETVRWSSLLGYAEMLRTGTTACLDMYFFEDVVFEAAIKAGIRCTGGESIFVFPSVSCDTAKTALEHTKKMAELYSDNTRINVVVNPHSVYTTTPQVLSQCIEVAEECSLPLHIHLSETTTETQICLQKYGLRPVSYCRDLGILTPRTTLAHVVDVNLEELTCLAEHGCVISHNPSSNMKLASGVSPIPEMIKRNLSVGLGTDGAASNNCLNMFMEMGRCALLHKVYWNNPTALFAQTVLDMATLGGAAAIHQPKLGVLAPGHPADLIALDMSMPNLQPMFNPISHLIYATTGMEVFLTMVEGEILYYNGTFTRFDYDSLSNEMKKVSHWVKEKLQLL.

Residues H70 and H72 each contribute to the Zn(2+) site. Residues E99 and H191 each contribute to the substrate site. Residue H218 coordinates Zn(2+). The substrate site is built by E221 and D306. D306 provides a ligand contact to Zn(2+).

The protein belongs to the metallo-dependent hydrolases superfamily. MTA/SAH deaminase family. Zn(2+) is required as a cofactor.

It catalyses the reaction S-adenosyl-L-homocysteine + H2O + H(+) = S-inosyl-L-homocysteine + NH4(+). It carries out the reaction S-methyl-5'-thioadenosine + H2O + H(+) = S-methyl-5'-thioinosine + NH4(+). Functionally, catalyzes the deamination of 5-methylthioadenosine and S-adenosyl-L-homocysteine into 5-methylthioinosine and S-inosyl-L-homocysteine, respectively. Is also able to deaminate adenosine. This chain is 5-methylthioadenosine/S-adenosylhomocysteine deaminase, found in Lawsonia intracellularis (strain PHE/MN1-00).